Consider the following 129-residue polypeptide: MSEITKEQVVDFIANMTVLELSQFIKELEEKFGVSAAAPAMGMMMAAPAAGEAAPAEEEKTEFDVILTNAGGNKIAVIKVVRALTGLGLKEAKAKVDELPSSIKEAVSKAEAEDAKKQLEESGATCEIK.

Belongs to the bacterial ribosomal protein bL12 family. In terms of assembly, homodimer. Part of the ribosomal stalk of the 50S ribosomal subunit. Forms a multimeric L10(L12)X complex, where L10 forms an elongated spine to which 2 to 4 L12 dimers bind in a sequential fashion. Binds GTP-bound translation factors.

Forms part of the ribosomal stalk which helps the ribosome interact with GTP-bound translation factors. Is thus essential for accurate translation. The sequence is that of Large ribosomal subunit protein bL12 from Solidesulfovibrio magneticus (strain ATCC 700980 / DSM 13731 / RS-1) (Desulfovibrio magneticus).